Reading from the N-terminus, the 230-residue chain is Ribulose-phosphate 3-epimerase (230 aa).

Position 10 (Ser10) interacts with substrate. A divalent metal cation is bound by residues His35, Asp37, and His68. The Proton acceptor role is filled by Asp37. Substrate is bound by residues His68, 146 to 149 (GFGG), 179 to 181 (DGG), and 201 to 202 (GS). A divalent metal cation is bound at residue Asp179. Residue Asp179 is the Proton donor of the active site.

The protein belongs to the ribulose-phosphate 3-epimerase family. Homohexamer. Requires a divalent metal cation as cofactor.

It carries out the reaction D-ribulose 5-phosphate = D-xylulose 5-phosphate. It functions in the pathway carbohydrate degradation. Its function is as follows. Catalyzes the reversible epimerization of D-ribulose 5-phosphate to D-xylulose 5-phosphate. The protein is Ribulose-phosphate 3-epimerase of Synechocystis sp. (strain ATCC 27184 / PCC 6803 / Kazusa).